A 490-amino-acid polypeptide reads, in one-letter code: Protein Mdm4 (490 aa).

Positions 25-108 (NQVRPKLPLL…YDMLRKNLVT (84 aa)) constitute an SWIB/MDM2 domain. Positions 129 to 160 (DIPSQDQLKQSAEESSTSRKRTTEDDIPTLPT) are disordered. The span at 130–143 (IPSQDQLKQSAEES) shows a compositional bias: polar residues. The region II stretch occupies residues 246-332 (SEQLGVGIKV…CWALRKDWYS (87 aa)). A RanBP2-type zinc finger spans residues 300 to 329 (SEDEWQCTECKKFNSPSKRYCFRCWALRKD). Position 342 is a phosphoserine; by CHEK2 (Ser342). Residue Ser367 is modified to Phosphoserine; by CHEK1 and CHEK2. The interval 393 to 490 (EFLDLAHSSE…IQLVIKVFIA (98 aa)) is necessary for interaction with USP2. The RING-type zinc finger occupies 437–478 (CSLCEKRPRDGNIIHGRTGHLVTCFHCARRLKKAGASCPICK). Residues 442–445 (KRPR) carry the Nuclear localization signal motif.

It belongs to the MDM2/MDM4 family. As to quaternary structure, interacts with MDM2. Interacts with TP53, TP73 and USP2. Found in a trimeric complex with USP2, MDM2 and MDM4. Interacts (phosphorylated) with YWHAG; negatively regulates MDM4 activity toward TP53. Post-translationally, phosphorylated. Phosphorylation at Ser-367 promotes interaction with YWHAG and subsequent ubiquitination and degradation. Phosphorylation at Ser-342 also induces ubiquitination and degradation but to a lower extent. In terms of processing, ubiquitinated and degraded by MDM2. Deubiquitination by USP2 on the other hand stabilizes the MDM4 protein. As to expression, expressed in all tissues tested with high levels in thymus.

It localises to the nucleus. Functionally, along with MDM2, contributes to TP53 regulation. Inhibits p53/TP53- and TP73/p73-mediated cell cycle arrest and apoptosis by binding its transcriptional activation domain. Inhibits degradation of MDM2. Can reverse MDM2-targeted degradation of TP53 while maintaining suppression of TP53 transactivation and apoptotic functions. This Homo sapiens (Human) protein is Protein Mdm4 (MDM4).